The sequence spans 406 residues: Beta-galactoside alpha-2,6-sialyltransferase 1 (406 aa).

Over 1–9 (MIHTNLKKK) the chain is Cytoplasmic. The helical; Signal-anchor for type II membrane protein transmembrane segment at 10 to 26 (FSCCVLVFLLFAVICVW) threads the bilayer. At 27–406 (KEKKKGSYYD…TLPGFRTIHC (380 aa)) the chain is on the lumenal side. Cystine bridges form between Cys142/Cys406, Cys184/Cys335, and Cys353/Cys364. N-linked (GlcNAc...) asparagine glycosylation is found at Asn149 and Asn161. Residues Ser189, Asn212, Asn233, 322 to 324 (SSG), Cys353, Tyr354, Thr365, Tyr369, His370, and Lys376 each bind substrate. Tyr369 carries the post-translational modification Phosphotyrosine.

Belongs to the glycosyltransferase 29 family. Monomer and homodimer. Post-translationally, N-glycosylated.

It is found in the golgi apparatus. Its subcellular location is the golgi stack membrane. The protein localises to the secreted. The catalysed reaction is a beta-D-galactoside + CMP-N-acetyl-beta-neuraminate = an N-acetyl-alpha-neuraminyl-(2-&gt;6)-beta-D-galactosyl derivative + CMP + H(+). It participates in protein modification; protein glycosylation. With respect to regulation, inhibited by CTP. Functionally, transfers sialic acid from CMP-sialic acid to galactose-containing acceptor substrates. In B lymphocytes, generates neuraminidase-sensitive lymphocyte cell-surface differentiation antigens, such as CDw75, HB-6 and CD76. This is Beta-galactoside alpha-2,6-sialyltransferase 1 (ST6GAL1) from Homo sapiens (Human).